Here is a 121-residue protein sequence, read N- to C-terminus: Putative iron-sulfur cluster insertion protein ErpA (121 aa).

Cys-49, Cys-113, and Cys-115 together coordinate iron-sulfur cluster.

Belongs to the HesB/IscA family. Homodimer. Iron-sulfur cluster serves as cofactor.

Required for insertion of 4Fe-4S clusters. The sequence is that of Putative iron-sulfur cluster insertion protein ErpA from Nitrosomonas europaea (strain ATCC 19718 / CIP 103999 / KCTC 2705 / NBRC 14298).